The chain runs to 1220 residues: Post-transcriptional regulator MKT1L (1220 aa).

Residues 1-107 (MRKAGANRNN…SPWNSPPQQT (107 aa)) are disordered. A compositionally biased stretch (basic residues) spans 34–70 (PHHHQHQHHHQHQHQHQHQHQHPHQHPHQHHHHHPHH).

The protein belongs to the XPG/RAD2 endonuclease family. In terms of assembly, forms a complex composed of at least MKT1L, PBP1, XAC1 and LSM12.

Its subcellular location is the cytoplasm. Its function is as follows. Involved in post-transcriptional regulation of gene expression. The sequence is that of Post-transcriptional regulator MKT1L from Trypanosoma brucei brucei (strain 927/4 GUTat10.1).